A 1025-amino-acid chain; its full sequence is Multidrug resistance protein MdtC (1025 aa).

The next 12 helical transmembrane spans lie at 3-23 (FFAL…AITL), 333-353 (EVEQ…FLFL), 360-380 (IIPA…MYLC), 387-407 (LSLM…IVVL), 431-451 (VGFT…PLLL), 463-483 (FAVT…TLTP), 528-548 (LVGV…ISIP), 853-873 (VILI…LYES), 875-895 (VHPL…LLAL), 897-917 (LFNA…IGIV), 953-973 (PIMM…LSGG), and 984-1004 (ITIV…TPVV).

Belongs to the resistance-nodulation-cell division (RND) (TC 2.A.6) family. MdtC subfamily. Part of a tripartite efflux system composed of MdtA, MdtB and MdtC. MdtC forms a heteromultimer with MdtB.

It localises to the cell inner membrane. The MdtABC tripartite complex confers resistance against novobiocin and deoxycholate. This chain is Multidrug resistance protein MdtC, found in Escherichia coli O7:K1 (strain IAI39 / ExPEC).